The following is a 465-amino-acid chain: Cysteine--tRNA ligase 2 (465 aa).

Position 30 (Cys30) interacts with Zn(2+). A 'HIGH' region motif is present at residues 32–42 (ITVYDYCHVGH). The Zn(2+) site is built by Cys214, His239, and Glu243. Residues 271-275 (KMSKS) carry the 'KMSKS' region motif. Lys274 serves as a coordination point for ATP.

This sequence belongs to the class-I aminoacyl-tRNA synthetase family. As to quaternary structure, monomer. Requires Zn(2+) as cofactor.

It is found in the cytoplasm. The catalysed reaction is tRNA(Cys) + L-cysteine + ATP = L-cysteinyl-tRNA(Cys) + AMP + diphosphate. The polypeptide is Cysteine--tRNA ligase 2 (Burkholderia lata (strain ATCC 17760 / DSM 23089 / LMG 22485 / NCIMB 9086 / R18194 / 383)).